Here is a 471-residue protein sequence, read N- to C-terminus: 3-hydroxylaminophenol mutase (471 aa).

The 86-residue stretch at 15–100 (NDVKFVDFRF…TCDVVEPSDG (86 aa)) folds into the GS beta-grasp domain. A GS catalytic domain is found at 107 to 471 (PRSIAKRAEA…PVEFEMYYSL (365 aa)).

The protein belongs to the glutamine synthetase family.

It catalyses the reaction 3-hydroxyaminophenol = aminohydroquinone. Is inhibited by H(2)O(2). 1,10-phenanthroline inhibits the activity slightly, but other metal cation chelators such as EDTA or tiron have no effect on the activity. Divalent metal cations and hydroxylamine have also no effect on the activity. Due to the relationship of the protein with glutamine synthetases, glutamate and glutamine were tested as inhibitors; neither preincubation of the compounds with the enzyme nor their addition to the assay buffer affected 3HAP mutase activity. In terms of biological role, catalyzes the isomerization of 3-hydroxylaminophenol (3HAP) to aminohydroquinone, a step in the degradative pathway of 3-nitrophenol. The enzymatic reaction is regiospecific since it leads to the formation of aminohydroquinone exclusively, without producing the isomeric 4-aminocatechol. Can also isomerize other hydroxylaminoaromatic compounds, such as hydroxylaminobenzene to a mixture of 2-aminophenol and 4-aminophenol, 4-hydroxylaminotoluene to 6-amino-m-cresol, and 2-chloro-5-hydroxylaminophenol to 2-amino-5-chlorohydroquinone. Does not act on 4-hydroxylaminobenzoate. This is 3-hydroxylaminophenol mutase from Cupriavidus pinatubonensis (strain JMP 134 / LMG 1197) (Cupriavidus necator (strain JMP 134)).